A 733-amino-acid polypeptide reads, in one-letter code: MNENDNNLENETGFSGRLIVVSNRLPVSIKKESNGKWSCKMSSGGLVAALSGLKSNFIWVGWIGAEIEEDDRKEIKELLWKDYSCIPVFLSEKVANEHYNGFSNGVLWPLFHYLPGDLDYDDRIWNSYVEANEQFSSVVAEILKPNDLVWVHDYHMMLLPEILKQKKPDARIGFFLHIPFPSSEIFRVLPCRKEILLGILNCCLIGFHTYDYARHFLKSCTRIVGLETAPNGVYFKDRFVQVGVFPVGIDPDKFFESLKTTQVQNRIKELKESFEGTKVLIGIDRLDYIKGIPQKLQAIERLFQKYPEWKGKLVLIQVAVPSRQDVEEYQKLKKEVEELVGRINGLYGSIGYSPIHYLFQSVDPSELTALYNISDAALITSIRDGMNLVAQEYIVCQTENNGVLILSEFTGAAQSLSGAVMINPWNTEEVADSIHNSLLMPPEEREEKHQMLLKYVTKHTASHWGLGFVKELNKASSNTDKMVTIQKLDIEKVVDIYKQSKRRLLIFAYDGTLIPYNNVPQLSRPSQELLNSFDILSNDPKTDVYILSGRDKKTLSEWFLGIQIGLSAEYGCFFKLPESTEWEQQVPSMDLSWKETIRPLFKYFTLRTPGSFFEEKEMLFTWHYRNADPIFGSIQARELHLHLDNLPLDVIVGDKTLGVRSYNINPLSSMKKVITDTIPKGLDLILLIGDTHIHPSELPTFDGKIFNISVGKKSVKDSYHLSDPAEVNYLIIN.

The protein in the N-terminal section; belongs to the glycosyltransferase 20 family. It in the C-terminal section; belongs to the trehalose phosphatase family.

It carries out the reaction D-glucose 6-phosphate + UDP-alpha-D-glucose = alpha,alpha-trehalose 6-phosphate + UDP + H(+). Synthesizes trehalose 6-phosphate, the precursor for the production of trehalose, the main carbohydrate storage reserve of the dormant spore. Trehalose accumulates in both prestalk and prespore cells and then is rapidly metabolized during terminal differentiation of stalk cells, while being stored in spores, where it serves as the principal energy and carbon source for germination. The sequence is that of Alpha,alpha-trehalose-phosphate synthase [UDP-forming] A (tpsA) from Dictyostelium discoideum (Social amoeba).